The primary structure comprises 181 residues: Peptide deformylase 2 (181 aa).

The Fe cation site is built by C109 and H151. E152 is an active-site residue. Fe cation is bound at residue H155.

This sequence belongs to the polypeptide deformylase family. It depends on Fe(2+) as a cofactor.

It carries out the reaction N-terminal N-formyl-L-methionyl-[peptide] + H2O = N-terminal L-methionyl-[peptide] + formate. Its function is as follows. Removes the formyl group from the N-terminal Met of newly synthesized proteins. Requires at least a dipeptide for an efficient rate of reaction. N-terminal L-methionine is a prerequisite for activity but the enzyme has broad specificity at other positions. This is Peptide deformylase 2 from Shewanella oneidensis (strain ATCC 700550 / JCM 31522 / CIP 106686 / LMG 19005 / NCIMB 14063 / MR-1).